Consider the following 316-residue polypeptide: L-lactate dehydrogenase (316 aa).

NAD(+)-binding positions include Val-16, Asp-37, Lys-42, Tyr-68, and 82–83 (GA). Substrate contacts are provided by Gln-85 and Arg-91. NAD(+)-binding positions include Ser-104, 121–123 (AAN), and Ser-146. 123-126 (NPVD) contacts substrate. 151–154 (DSAR) is a binding site for substrate. Beta-D-fructose 1,6-bisphosphate contacts are provided by Arg-156 and His-171. His-178 functions as the Proton acceptor in the catalytic mechanism. Tyr-222 is subject to Phosphotyrosine. Thr-231 is a binding site for substrate.

Belongs to the LDH/MDH superfamily. LDH family. Homotetramer.

The protein resides in the cytoplasm. It carries out the reaction (S)-lactate + NAD(+) = pyruvate + NADH + H(+). It participates in fermentation; pyruvate fermentation to lactate; (S)-lactate from pyruvate: step 1/1. With respect to regulation, allosterically activated by fructose 1,6-bisphosphate (FBP). In terms of biological role, catalyzes the conversion of lactate to pyruvate. This is L-lactate dehydrogenase from Staphylococcus epidermidis (strain ATCC 12228 / FDA PCI 1200).